Reading from the N-terminus, the 270-residue chain is Type II restriction enzyme CeqI (270 aa).

The catalysed reaction is Endonucleolytic cleavage of DNA to give specific double-stranded fragments with terminal 5'-phosphates.. Functionally, a P subtype restriction enzyme that recognizes the double-stranded sequence 5'-GATATC-3' and cleaves after T-3. The sequence is that of Type II restriction enzyme CeqI (ceqIR) from Rhodococcus hoagii (Corynebacterium equii).